The following is a 392-amino-acid chain: ATP phosphoribosyltransferase regulatory subunit (392 aa).

Belongs to the class-II aminoacyl-tRNA synthetase family. HisZ subfamily. In terms of assembly, heteromultimer composed of HisG and HisZ subunits.

Its subcellular location is the cytoplasm. Its pathway is amino-acid biosynthesis; L-histidine biosynthesis; L-histidine from 5-phospho-alpha-D-ribose 1-diphosphate: step 1/9. Its function is as follows. Required for the first step of histidine biosynthesis. May allow the feedback regulation of ATP phosphoribosyltransferase activity by histidine. The protein is ATP phosphoribosyltransferase regulatory subunit of Gloeobacter violaceus (strain ATCC 29082 / PCC 7421).